The following is a 248-amino-acid chain: Mannose-binding protein C (248 aa).

Positions 1-20 are cleaved as a signal peptide; that stretch reads MSLFPSLTLLLLSVVATSYS. A Collagen-like domain is found at 42-99; the sequence is GINGFPGKDGRDGTKGEKGEPGQGLRGLQGPPGKLGPPGNPGSSGSPGPKGQKGDPGE. Residues 43–111 are disordered; that stretch reads INGFPGKDGR…DCESSLAASE (69 aa). Proline 47 is modified (4-hydroxyproline). Residues 49–61 are compositionally biased toward basic and acidic residues; the sequence is KDGRDGTKGEKGE. A 4-hydroxyproline mark is found at proline 73, proline 79, proline 82, and proline 88. A compositionally biased stretch (low complexity) spans 82–91; sequence PGSSGSPGPK. Residues 112 to 130 adopt a coiled-coil conformation; that stretch reads RKALQTEMARIKKWLTFSL. The C-type lectin domain maps to 134–245; the sequence is VGNKFFLTNG…CSSSHLALCE (112 aa). 2 cysteine pairs are disulfide-bonded: cysteine 155-cysteine 244 and cysteine 222-cysteine 236.

Oligomeric complex of 3 or more homotrimers. Interacts with MASP1 and MASP2. Interacts with MEP1A and MEP1B and may inhibit their catalytic activity. Hydroxylation on proline residues within the sequence motif, GXPG, is most likely to be 4-hydroxy as this fits the requirement for 4-hydroxylation in vertebrates.

Its subcellular location is the secreted. In terms of biological role, calcium-dependent lectin involved in innate immune defense. Binds mannose, fucose and N-acetylglucosamine on different microorganisms and activates the lectin complement pathway. Binds to late apoptotic cells, as well as to apoptotic blebs and to necrotic cells, but not to early apoptotic cells, facilitating their uptake by macrophages. This chain is Mannose-binding protein C (MBL2), found in Macaca fascicularis (Crab-eating macaque).